We begin with the raw amino-acid sequence, 360 residues long: tRNA-specific 2-thiouridylase MnmA (360 aa).

ATP is bound by residues 9–16 and Leu35; that span reads AMSGGVDS. Cys104 functions as the Nucleophile in the catalytic mechanism. Cys104 and Cys197 are oxidised to a cystine. Position 128 (Gly128) interacts with ATP. The interaction with tRNA stretch occupies residues 147-149; it reads KDQ. The active-site Cysteine persulfide intermediate is Cys197.

Belongs to the MnmA/TRMU family.

It is found in the cytoplasm. It catalyses the reaction S-sulfanyl-L-cysteinyl-[protein] + uridine(34) in tRNA + AH2 + ATP = 2-thiouridine(34) in tRNA + L-cysteinyl-[protein] + A + AMP + diphosphate + H(+). Catalyzes the 2-thiolation of uridine at the wobble position (U34) of tRNA, leading to the formation of s(2)U34. The sequence is that of tRNA-specific 2-thiouridylase MnmA from Salinispora arenicola (strain CNS-205).